The primary structure comprises 1289 residues: uncharacterized protein (1289 aa).

The first 23 residues, methionine 1–histidine 23, serve as a signal peptide directing secretion. The LTD domain maps to glutamate 141–aspartate 277.

This is an uncharacterized protein from Bacillus subtilis (strain 168).